The primary structure comprises 203 residues: Dual-action ribosomal maturation protein DarP (203 aa).

Residues 1 to 13 show a composition bias toward polar residues; that stretch reads MQPMTRNSRNSPG. The interval 1 to 39 is disordered; that stretch reads MQPMTRNSRNSPGSRFPGAFAPEPDMDEPKSKSQKKRDM. Residues 27–39 show a composition bias toward basic and acidic residues; it reads DEPKSKSQKKRDM.

The protein belongs to the DarP family.

It is found in the cytoplasm. In terms of biological role, member of a network of 50S ribosomal subunit biogenesis factors which assembles along the 30S-50S interface, preventing incorrect 23S rRNA structures from forming. Promotes peptidyl transferase center (PTC) maturation. This chain is Dual-action ribosomal maturation protein DarP, found in Cupriavidus pinatubonensis (strain JMP 134 / LMG 1197) (Cupriavidus necator (strain JMP 134)).